Reading from the N-terminus, the 507-residue chain is Cytochrome P450 monooxygenase ptmU (507 aa).

A helical transmembrane segment spans residues 4–24 (VNAWWVGGSLLLGIWAIVVFF). Asn98, Asn202, and Asn398 each carry an N-linked (GlcNAc...) asparagine glycan. Cys444 provides a ligand contact to heme.

It belongs to the cytochrome P450 family. Heme is required as a cofactor.

The protein localises to the membrane. Its pathway is secondary metabolite biosynthesis. Functionally, cytochrome P450 monooxygenase; part of the gene cluster that mediates the biosynthesis of the indole diterpenes penitrems. The geranylgeranyl diphosphate (GGPP) synthase ptmG catalyzes the first step in penitrem biosynthesis via conversion of farnesyl pyrophosphate and isopentyl pyrophosphate into geranylgeranyl pyrophosphate (GGPP). Condensation of indole-3-glycerol phosphate with GGPP by the prenyl transferase ptmC then forms 3-geranylgeranylindole (3-GGI). Epoxidation by the FAD-dependent monooxygenase ptmM leads to a epoxidized-GGI that is substrate of the terpene cyclase ptmB for cyclization to yield paspaline. Paspaline is subsequently converted to 13-desoxypaxilline by the cytochrome P450 monooxygenase ptmP, the latter being then converted to paxilline by the cytochrome P450 monooxygenase ptmQ. Paxilline is converted to beta-paxitriol via C-10 ketoreduction by the short-chain dehydrogenase ptmH which can be monoprenylated at the C-20 by the indole diterpene prenyltransferase ptmD. A two-step elimination (acetylation and elimination) process performed by the O-acetyltransferase ptmV and ptmI leads to the production of the prenylated form of penijanthine. The FAD-linked oxidoreductase ptmO then converts the prenylated form of penijanthine into PC-M5 which is in turn transformed into PC-M4 by the aromatic dimethylallyltransferase ptmE. Five sequential oxidative transformations performed by the cytochrome P450 monooxygenases ptmK, ptmU, ptmL, ptmN and ptmJ yield the various penitrem compounds. PtmK, ptmU and ptmM are involved in the formation of the key bicyclic ring of penitrem C via the formation of the intermediates secopenitrem D and penitrem D. PtmL catalyzes the epoxidation of penitrem D and C to yield penitrem B and F, respectively. PtmJ catalyzes the last benzylic hydroxylation to convert penitrem B to prenitrem E and penitrem F to penitrem A. In Penicillium ochrochloron, this protein is Cytochrome P450 monooxygenase ptmU.